The primary structure comprises 143 residues: Transcriptional regulator MraZ (143 aa).

SpoVT-AbrB domains follow at residues 5–47 (TYTP…SARE) and 76–119 (ASDE…DSES).

The protein belongs to the MraZ family. Forms oligomers.

It is found in the cytoplasm. The protein localises to the nucleoid. The chain is Transcriptional regulator MraZ from Micrococcus luteus (strain ATCC 4698 / DSM 20030 / JCM 1464 / CCM 169 / CCUG 5858 / IAM 1056 / NBRC 3333 / NCIMB 9278 / NCTC 2665 / VKM Ac-2230) (Micrococcus lysodeikticus).